The chain runs to 133 residues: Type III secretion protein HrcQb (133 aa).

Positions Met-1–Val-21 are enriched in acidic residues. The tract at residues Met-1–Met-60 is disordered. A compositionally biased stretch (basic and acidic residues) spans Glu-49 to Pro-59.

This sequence belongs to the FliN/MopA/SpaO family. As to quaternary structure, homotetramer. The four monomers assemble into two tightly bound homodimers. Interacts with HrcQa.

Its subcellular location is the cytoplasm. Its function is as follows. Component of the type III secretion system, which is required for effector protein delivery, parasitism, and pathogenicity. Probably participates in the formation of a C-ring-like assembly along with HrcQa. This is Type III secretion protein HrcQb (hrcQb) from Pseudomonas syringae pv. syringae.